A 210-amino-acid polypeptide reads, in one-letter code: Probable nicotinate-nucleotide adenylyltransferase (210 aa).

This sequence belongs to the NadD family.

It carries out the reaction nicotinate beta-D-ribonucleotide + ATP + H(+) = deamido-NAD(+) + diphosphate. The protein operates within cofactor biosynthesis; NAD(+) biosynthesis; deamido-NAD(+) from nicotinate D-ribonucleotide: step 1/1. In terms of biological role, catalyzes the reversible adenylation of nicotinate mononucleotide (NaMN) to nicotinic acid adenine dinucleotide (NaAD). In Streptococcus pyogenes serotype M6 (strain ATCC BAA-946 / MGAS10394), this protein is Probable nicotinate-nucleotide adenylyltransferase.